A 186-amino-acid chain; its full sequence is Large ribosomal subunit protein uL22 (186 aa).

Ser-158 bears the Phosphoserine mark. A disordered region spans residues 159–186 (KATDDEPAKKKLSKKKLQRQKEKMLRSE). At Thr-161 the chain carries Phosphothreonine. The span at 177 to 186 (RQKEKMLRSE) shows a compositional bias: basic and acidic residues.

The protein belongs to the universal ribosomal protein uL22 family.

This chain is Large ribosomal subunit protein uL22 (RpL17), found in Drosophila melanogaster (Fruit fly).